Reading from the N-terminus, the 166-residue chain is Testis-expressed protein 51 (166 aa).

A signal peptide spans 1–15; it reads MLPLLIICLLPAIEG. Residues 138 to 154 form a helical membrane-spanning segment; sequence SLWAVSLSSALLLAIAG.

The protein resides in the membrane. The sequence is that of Testis-expressed protein 51 from Homo sapiens (Human).